Reading from the N-terminus, the 126-residue chain is Holo-[acyl-carrier-protein] synthase (126 aa).

Aspartate 9 and glutamate 58 together coordinate Mg(2+).

This sequence belongs to the P-Pant transferase superfamily. AcpS family. The cofactor is Mg(2+).

The protein resides in the cytoplasm. It carries out the reaction apo-[ACP] + CoA = holo-[ACP] + adenosine 3',5'-bisphosphate + H(+). Transfers the 4'-phosphopantetheine moiety from coenzyme A to a Ser of acyl-carrier-protein. The polypeptide is Holo-[acyl-carrier-protein] synthase (Klebsiella pneumoniae subsp. pneumoniae (strain ATCC 700721 / MGH 78578)).